The following is a 51-amino-acid chain: U-Asilidin(1)-Eru1a (51 aa).

The N-terminal stretch at 1–23 (MANYIDVLSFLAIICATVLATLA) is a signal peptide. Disulfide bonds link cysteine 26-cysteine 40, cysteine 33-cysteine 44, and cysteine 39-cysteine 49.

It belongs to the asilidin-1 family. As to expression, expressed by the venom gland. The most highly expressed peptides U-Asilidin1-Mar1a is around 3000 times higher expressed in the venom thoracic glands compared to its body tissues.

It is found in the secreted. In terms of biological role, induces neurotoxic effect on honeybees, including slow movements, disorientation and paralysis. Since it provokes similar symptoms than omega-atracotoxin, it is probable that it acts in the same way by inhibiting voltage-gated calcium channels. In Eutolmus rufibarbis (Golden-tabbed robberfly), this protein is U-Asilidin(1)-Eru1a.